Reading from the N-terminus, the 359-residue chain is Protein disulfide-isomerase tigA (359 aa).

Residues 1-19 form the signal peptide; it reads MVRLSNLVSCLGLASAVTA. Thioredoxin domains lie at 20 to 129 and 131 to 250; these read AVVD…EKTG and KPRG…EKTG. Active-site nucleophile residues include C49, C52, C169, and C172. 2 disulfides stabilise this stretch: C49/C52 and C169/C172. Positions 356–359 match the Prevents secretion from ER motif; that stretch reads KDEL.

This sequence belongs to the protein disulfide isomerase family.

It is found in the endoplasmic reticulum lumen. It catalyses the reaction Catalyzes the rearrangement of -S-S- bonds in proteins.. This chain is Protein disulfide-isomerase tigA (tigA), found in Aspergillus niger.